A 456-amino-acid chain; its full sequence is ATP synthase subunit beta 1 (456 aa).

152 to 159 (GGAGVGKS) is a binding site for ATP.

Belongs to the ATPase alpha/beta chains family. F-type ATPases have 2 components, CF(1) - the catalytic core - and CF(0) - the membrane proton channel. CF(1) has five subunits: alpha(3), beta(3), gamma(1), delta(1), epsilon(1). CF(0) has three main subunits: a(1), b(2) and c(9-12). The alpha and beta chains form an alternating ring which encloses part of the gamma chain. CF(1) is attached to CF(0) by a central stalk formed by the gamma and epsilon chains, while a peripheral stalk is formed by the delta and b chains.

The protein localises to the cell membrane. It catalyses the reaction ATP + H2O + 4 H(+)(in) = ADP + phosphate + 5 H(+)(out). Produces ATP from ADP in the presence of a proton gradient across the membrane. The catalytic sites are hosted primarily by the beta subunits. This chain is ATP synthase subunit beta 1, found in Listeria monocytogenes serovar 1/2a (strain ATCC BAA-679 / EGD-e).